The chain runs to 283 residues: Phosphatidylglycerol--prolipoprotein diacylglyceryl transferase (283 aa).

Helical transmembrane passes span 19–39 (IGPI…LIGV), 59–79 (LSIW…VLFQ), 90–110 (IIAI…GTLA), and 120–140 (VPFW…QAIG). Arg141 is an a 1,2-diacyl-sn-glycero-3-phospho-(1'-sn-glycerol) binding site. 3 helical membrane passes run 181–201 (TFLY…TLFF), 212–232 (VGTL…WIEG), and 245–265 (IAQV…AWLY).

Belongs to the Lgt family.

The protein localises to the cell inner membrane. The enzyme catalyses L-cysteinyl-[prolipoprotein] + a 1,2-diacyl-sn-glycero-3-phospho-(1'-sn-glycerol) = an S-1,2-diacyl-sn-glyceryl-L-cysteinyl-[prolipoprotein] + sn-glycerol 1-phosphate + H(+). Its pathway is protein modification; lipoprotein biosynthesis (diacylglyceryl transfer). Its function is as follows. Catalyzes the transfer of the diacylglyceryl group from phosphatidylglycerol to the sulfhydryl group of the N-terminal cysteine of a prolipoprotein, the first step in the formation of mature lipoproteins. The protein is Phosphatidylglycerol--prolipoprotein diacylglyceryl transferase of Nostoc sp. (strain PCC 7120 / SAG 25.82 / UTEX 2576).